We begin with the raw amino-acid sequence, 73 residues long: Stigmurin (73 aa).

The first 22 residues, 1–22 (MQIKHLITLFFLVLIVADQCSA), serve as a signal peptide directing secretion. At Lys39 the chain carries Lysine amide. Residues 45-73 (EISAQIEQYKDLQKREAELEKLLDRLPMY) constitute a propeptide that is removed on maturation.

This sequence belongs to the non-disulfide-bridged peptide (NDBP) superfamily. Short antimicrobial peptide (group 4) family. Expressed by the venom gland.

It localises to the secreted. Functionally, antimicrobial peptide with activity against Gram-positive bacterial strains (S.aureus (MIC=2-140 uM), methicillin-resistant S.aureus (MRSA) (MIC=8-17 uM), S.epidermidis (MIC=1.17 uM), and the yeasts C.albicans, C.krusei, and C.glabrata (MIC=34-69 uM)). Acts by disrupting the cell membrane (observed on outer layer of the S.aureus). Is not active against Gram-negative bacteria (E.coli, E.Cloacae, P.aeruginosa), and the Gram-positive bacterium E.faecalis. Also shows toxicity against several cell lines, but possess low hemolytic activity at the highest concentration tested. Also shows antiparasitic activity against Trypanosoma cruzi by decreasing the viability of the epimastigote and trypomastigote forms of the parasite. Displays high hydroxyl radical scavenging activity (antioxidant action). In a wound infection model, the topical application of this peptide demonstrates antibacterial effects, as well as an ability to accelerate wound closure speed, which suggests the induction of tissue repair. In the model of polymicrobial sepsis, it exhibits an antibiotic effect, reducing the levels of microorganisms in the infectious focus and the inflammatory responses in the lung and cecum of septic animals. In Tityus stigmurus (Brazilian scorpion), this protein is Stigmurin.